Here is a 373-residue protein sequence, read N- to C-terminus: Anhydro-N-acetylmuramic acid kinase (373 aa).

Position 12-19 (12-19) interacts with ATP; it reads GTSLDGVD.

This sequence belongs to the anhydro-N-acetylmuramic acid kinase family.

It catalyses the reaction 1,6-anhydro-N-acetyl-beta-muramate + ATP + H2O = N-acetyl-D-muramate 6-phosphate + ADP + H(+). The protein operates within amino-sugar metabolism; 1,6-anhydro-N-acetylmuramate degradation. Its pathway is cell wall biogenesis; peptidoglycan recycling. Catalyzes the specific phosphorylation of 1,6-anhydro-N-acetylmuramic acid (anhMurNAc) with the simultaneous cleavage of the 1,6-anhydro ring, generating MurNAc-6-P. Is required for the utilization of anhMurNAc either imported from the medium or derived from its own cell wall murein, and thus plays a role in cell wall recycling. This is Anhydro-N-acetylmuramic acid kinase from Salmonella agona (strain SL483).